The primary structure comprises 706 residues: Choline transporter-like protein 2 (706 aa).

At 1-33 (MGKDSQNYYGKHGTPQKYDPTFKGPIYNRGCTD) the chain is on the cytoplasmic side. At T14 the chain carries Phosphothreonine. Residues 34–54 (VICCVLLFLAIVGYVAVGIIA) traverse the membrane as a helical segment. Residues 55-232 (WTHGDPRKVI…QIFEDYTVSW (178 aa)) lie on the Extracellular side of the membrane. Residues N187 and N200 are each glycosylated (N-linked (GlcNAc...) asparagine). A helical membrane pass occupies residues 233 to 253 (YWIIIGLVIAMVLSLLFIVLL). The Cytoplasmic segment spans residues 254–256 (RFL). The chain crosses the membrane as a helical span at residues 257 to 277 (AGIMVWVMIVMVILVLGYGIF). Residues 278–315 (HCYMEYSRLRGEAGSDVSLVDLGFQTDLRVYLHLRQTW) are Extracellular-facing. The chain crosses the membrane as a helical span at residues 316–336 (MAFMIILSILEVVIILLLIFL). Topologically, residues 337–364 (RKRILIAIALIKEASRAVGHVMCSLLYP) are cytoplasmic. Residues 365-385 (LVTFFLLCLCIAYWASTSVFL) form a helical membrane-spanning segment. Topologically, residues 386–454 (STSNTAVYKV…LQIFNAFMFF (69 aa)) are extracellular. N417 carries N-linked (GlcNAc...) asparagine glycosylation. The helical transmembrane segment at 455–477 (WLANFVLALGQVTLAGAFASYYW) threads the bilayer. Over 478-504 (AMRKPDDMPAFPLFSAFGRALRYHTGS) the chain is Cytoplasmic. A helical membrane pass occupies residues 505-525 (LAFGSLILAIVQIIRVMLEYL). The Extracellular segment spans residues 526–563 (DQRLKAAQNKFAKFLMVCLKCCFWCLEKFIKFLNRNAY). Residues 564-584 (IMIAIYGTNFCTSARNAFFLL) traverse the membrane as a helical segment. Residues 585–599 (MRNIIRVAVLDKVTD) lie on the Cytoplasmic side of the membrane. Residues 600-620 (FLFLLGKLLIVGSVGILAFFF) traverse the membrane as a helical segment. At 621-638 (FTHRIRIVQDTAPPLNYY) the chain is on the extracellular side. The helical transmembrane segment at 639–659 (WVPILTVIIGSYLIAHGFFSV) threads the bilayer. Residues 660-706 (YGMCVDTLFLCFLEDLERNDGSAERPYFMSSTLKKLLNKTNKKVAES) are Cytoplasmic-facing.

This sequence belongs to the CTL (choline transporter-like) family. In terms of assembly, interacts with COCH. In terms of processing, glycosylated, glycosylation differs from tissue to tissue. The molecular mass of the mature glycosylated protein is highest in kidney, followed by lung, colon and spleen, then brain and tongue. As to expression, expressed at high levels in lung, colon, inner ear and spleen (at protein level). Progressively lower levels in brain, tongue, liver and kidney (at protein level). In the kidney, prominent expression in glomeruli in the lining of Bowman's capsule and on the mesangial cells adjacent to the vessels within the glomerulus (at protein level). Strongly expressed on the membranes of splenocytes and in lung parenchyme (at protein level). In terms of tissue distribution, expressed at higher levels than isoform 2 in colon, heart, kidney, lung, cochlea, tongue and muscle, as well as in the inner ear. Predominantly expressed in brain, liver and spleen.

It localises to the cell membrane. The protein localises to the mitochondrion outer membrane. It catalyses the reaction choline(out) + n H(+)(in) = choline(in) + n H(+)(out). The catalysed reaction is ethanolamine(out) + n H(+)(in) = ethanolamine(in) + n H(+)(out). In terms of biological role, choline/H+ antiporter, mainly in mitochodria. Also acts as a low-affinity ethanolamine/H+ antiporter, regulating the supply of extracellular ethanolamine (Etn) for the CDP-Etn pathway, redistribute intracellular Etn and balance the CDP-Cho and CDP-Etn arms of the Kennedy pathway. This Mus musculus (Mouse) protein is Choline transporter-like protein 2 (Slc44a2).